The primary structure comprises 295 residues: Very long chain fatty acid elongase 5 (295 aa).

The next 7 helical transmembrane spans lie at 26–46 (WLLLDNYVPTIFFTALYLFIV), 64–84 (ILVVYNLGLTLLSFYMFYELV), 112–132 (VLWWYYFSKLIEFMDTFFFIL), 150–170 (MLNIWWFVMNWVPCGHSFFGA), 172–192 (LNSFIHVLMYSYYGLSAIPAI), 207–223 (LTQFVLTMTQTTCAMIW), and 227–247 (FPMGWLYFQNSYMISLIILFT). A disordered region spans residues 265-295 (YQNGSASAVNGYTNSFSSLEDNVKQRKQRQN). A compositionally biased stretch (polar residues) spans 266–284 (QNGSASAVNGYTNSFSSLE).

This sequence belongs to the ELO family. ELOVL5 subfamily.

The protein localises to the endoplasmic reticulum membrane. Its subcellular location is the cell projection. The protein resides in the dendrite. It carries out the reaction a very-long-chain acyl-CoA + malonyl-CoA + H(+) = a very-long-chain 3-oxoacyl-CoA + CO2 + CoA. The enzyme catalyses (6Z,9Z,12Z)-octadecatrienoyl-CoA + malonyl-CoA + H(+) = (8Z,11Z,14Z)-3-oxoeicosatrienoyl-CoA + CO2 + CoA. It catalyses the reaction (9Z,12Z,15Z)-octadecatrienoyl-CoA + malonyl-CoA + H(+) = (11Z,14Z,17Z)-3-oxoeicosatrienoyl-CoA + CO2 + CoA. The catalysed reaction is (9Z)-hexadecenoyl-CoA + malonyl-CoA + H(+) = 3-oxo-(11Z)-octadecenoyl-CoA + CO2 + CoA. It carries out the reaction (9Z)-octadecenoyl-CoA + malonyl-CoA + H(+) = 3-oxo-(11Z)-eicosenoyl-CoA + CO2 + CoA. The enzyme catalyses (11Z)-octadecenoyl-CoA + malonyl-CoA + H(+) = 3-oxo-(13Z)-eicosenoyl-CoA + CO2 + CoA. It catalyses the reaction (9Z,12Z)-octadecadienoyl-CoA + malonyl-CoA + H(+) = (11Z,14Z)-3-oxoicosa-11,14-dienoyl-CoA + CO2 + CoA. The catalysed reaction is (6Z,9Z,12Z,15Z)-octadecatetraenoyl-CoA + malonyl-CoA + H(+) = (8Z,11Z,14Z,17Z)-3-oxoicosatetraenoyl-CoA + CO2 + CoA. It carries out the reaction (5Z,8Z,11Z,14Z)-eicosatetraenoyl-CoA + malonyl-CoA + H(+) = (7Z,10Z,13Z,16Z)-3-oxodocosatetraenoyl-CoA + CO2 + CoA. The enzyme catalyses (5Z,8Z,11Z,14Z,17Z)-eicosapentaenoyl-CoA + malonyl-CoA + H(+) = 3-oxo-(7Z,10Z,13Z,16Z,19Z)-docosapentaenoyl-CoA + CO2 + CoA. The protein operates within lipid metabolism; polyunsaturated fatty acid biosynthesis. Its function is as follows. Catalyzes the first and rate-limiting reaction of the four reactions that constitute the long-chain fatty acids elongation cycle. This endoplasmic reticulum-bound enzymatic process allows the addition of 2 carbons to the chain of long- and very long-chain fatty acids (VLCFAs) per cycle. Condensing enzyme that acts specifically toward polyunsaturated acyl-CoA with the higher activity toward C18:3(n-6) acyl-CoA. May participate in the production of monounsaturated and of polyunsaturated VLCFAs of different chain lengths that are involved in multiple biological processes as precursors of membrane lipids and lipid mediators. In conditions where the essential linoleic and alpha linoleic fatty acids are lacking it is also involved in the synthesis of Mead acid from oleic acid. This is Very long chain fatty acid elongase 5 from Xenopus laevis (African clawed frog).